The primary structure comprises 502 residues: Putative F-box/FBD/LRR-repeat protein At5g22610 (502 aa).

In terms of domain architecture, F-box spans 17–63 (EDLISKLPEVLLSQILSYLPTKDIVRTSVLSKRWKSVWLLIPGLDLD). LRR repeat units follow at residues 70-98 (YDTF…KLSI), 99-127 (QKNE…DVEF), 147-180 (CKTL…CLEE), 181-206 (NVYS…TIVK), 208-228 (DDNV…SVGY), 238-263 (YYYD…TFNN), and 344-373 (SVWL…VLET). Residues 384 to 435 (VERRVSSVPECLLSSLEFVEIKNRISVDDGALEVARYFVENSVNLQKVVLRL) enclose the FBD domain.

The polypeptide is Putative F-box/FBD/LRR-repeat protein At5g22610 (Arabidopsis thaliana (Mouse-ear cress)).